The following is a 170-amino-acid chain: Adenine phosphoribosyltransferase (170 aa).

Belongs to the purine/pyrimidine phosphoribosyltransferase family. In terms of assembly, homodimer.

Its subcellular location is the cytoplasm. The catalysed reaction is AMP + diphosphate = 5-phospho-alpha-D-ribose 1-diphosphate + adenine. The protein operates within purine metabolism; AMP biosynthesis via salvage pathway; AMP from adenine: step 1/1. Its function is as follows. Catalyzes a salvage reaction resulting in the formation of AMP, that is energically less costly than de novo synthesis. The polypeptide is Adenine phosphoribosyltransferase (Trichodesmium erythraeum (strain IMS101)).